Reading from the N-terminus, the 149-residue chain is UPF0178 protein Mmwyl1_2258 (149 aa).

The protein belongs to the UPF0178 family.

The polypeptide is UPF0178 protein Mmwyl1_2258 (Marinomonas sp. (strain MWYL1)).